Consider the following 172-residue polypeptide: Protein-export protein SecB (172 aa).

Positions 153–172 (AQGQGGDSGIVMPDGSQARH) are disordered.

Belongs to the SecB family. In terms of assembly, homotetramer, a dimer of dimers. One homotetramer interacts with 1 SecA dimer.

The protein localises to the cytoplasm. Functionally, one of the proteins required for the normal export of preproteins out of the cell cytoplasm. It is a molecular chaperone that binds to a subset of precursor proteins, maintaining them in a translocation-competent state. It also specifically binds to its receptor SecA. This Cupriavidus metallidurans (strain ATCC 43123 / DSM 2839 / NBRC 102507 / CH34) (Ralstonia metallidurans) protein is Protein-export protein SecB.